The chain runs to 453 residues: Iron-sulfur cluster assembly SufBD family protein slr0076 (453 aa).

Belongs to the iron-sulfur cluster assembly SufBD family.

The sequence is that of Iron-sulfur cluster assembly SufBD family protein slr0076 from Synechocystis sp. (strain ATCC 27184 / PCC 6803 / Kazusa).